A 1001-amino-acid polypeptide reads, in one-letter code: RNA-binding protein 12B (1001 aa).

3 positions are modified to phosphoserine: S98, S101, and S112. K114 is covalently cross-linked (Glycyl lysine isopeptide (Lys-Gly) (interchain with G-Cter in SUMO2)). The span at 119-128 shows a compositional bias: polar residues; that stretch reads NSGYGSSINQ. A disordered region spans residues 119–147; it reads NSGYGSSINQDAGFHTNGTGHGNLRPRKT. K151 participates in a covalent cross-link: Glycyl lysine isopeptide (Lys-Gly) (interchain with G-Cter in SUMO2). One can recognise an RRM 1 domain in the interval 155–230; sequence PYLFLRGLPY…RFIEVMQGSE (76 aa). Residues 247–262 are compositionally biased toward basic and acidic residues; the sequence is LRRSEEHSPPRGINDR. The tract at residues 247-278 is disordered; that stretch reads LRRSEEHSPPRGINDRHFRKRSHSKSPRRTRS. 2 positions are modified to phosphoserine: S250 and S254. A compositionally biased stretch (basic residues) spans 263-278; it reads HFRKRSHSKSPRRTRS. At T276 the chain carries Phosphothreonine. 4 positions are modified to phosphoserine: S278, S280, S292, and S294. The region spanning 284–360 is the RRM 2 domain; sequence FYVHLKNLSL…RPVHIDPISR (77 aa). Residue K319 is modified to N6-acetyllysine. Residue K335 forms a Glycyl lysine isopeptide (Lys-Gly) (interchain with G-Cter in SUMO2) linkage. Residue S377 is modified to Phosphoserine. One can recognise an RRM 3 domain in the interval 400-477; sequence LCIYIRNFPF…TEVLLRLISE (78 aa). Residues K514 and K541 each participate in a glycyl lysine isopeptide (Lys-Gly) (interchain with G-Cter in SUMO2) cross-link. The interval 544-587 is disordered; that stretch reads QRDFRQPDRHPPEDFRHSSEDFRFPPEDFRHSPEDFRRPREEDF. S575, S591, and S638 each carry phosphoserine. Positions 631–881 are enriched in basic and acidic residues; it reads LEEDFRRSPT…FRSPPDDFRS (251 aa). The segment at 631–882 is disordered; sequence LEEDFRRSPT…RSPPDDFRSH (252 aa). Position 640 is a phosphothreonine (T640). Residues S710 and S718 each carry the phosphoserine modification. K895 participates in a covalent cross-link: Glycyl lysine isopeptide (Lys-Gly) (interchain with G-Cter in SUMO2). The region spanning 925-1001 is the RRM 4 domain; sequence TPIKIMNLPF…GPRKVKLTLL (77 aa).

This chain is RNA-binding protein 12B (RBM12B), found in Homo sapiens (Human).